We begin with the raw amino-acid sequence, 145 residues long: Protein cornichon homolog 1 (145 aa).

3 helical membrane passes run 5 to 25 (FAAF…FFAI), 57 to 77 (IIHG…SILA), and 116 to 136 (LRIS…YLYA).

Belongs to the cornichon family. Interacts with glr-1. Widely expressed in the nervous system including in the AVA interneurons.

It localises to the endoplasmic reticulum membrane. Its subcellular location is the synapse. It is found in the cell projection. The protein resides in the dendrite. Functionally, negatively regulates export of glr-1 from the endoplasmic reticulum to synapses. The sequence is that of Protein cornichon homolog 1 from Caenorhabditis elegans.